The sequence spans 333 residues: uncharacterized protein (333 aa).

Belongs to the proline racemase family.

This is an uncharacterized protein from Vibrio parahaemolyticus serotype O3:K6 (strain RIMD 2210633).